The chain runs to 170 residues: Phosphopantetheine adenylyltransferase (170 aa).

Position 14 (Thr-14) interacts with substrate. ATP contacts are provided by residues 14–15 and His-22; that span reads TF. 3 residues coordinate substrate: Lys-46, Leu-78, and Arg-92. ATP-binding positions include 93–95, Glu-103, and 128–134; these read GLR and WLYISST.

The protein belongs to the bacterial CoaD family. Homohexamer. The cofactor is Mg(2+).

Its subcellular location is the cytoplasm. The enzyme catalyses (R)-4'-phosphopantetheine + ATP + H(+) = 3'-dephospho-CoA + diphosphate. It functions in the pathway cofactor biosynthesis; coenzyme A biosynthesis; CoA from (R)-pantothenate: step 4/5. In terms of biological role, reversibly transfers an adenylyl group from ATP to 4'-phosphopantetheine, yielding dephospho-CoA (dPCoA) and pyrophosphate. This Oleidesulfovibrio alaskensis (strain ATCC BAA-1058 / DSM 17464 / G20) (Desulfovibrio alaskensis) protein is Phosphopantetheine adenylyltransferase.